An 80-amino-acid polypeptide reads, in one-letter code: Exodeoxyribonuclease 7 small subunit (80 aa).

This sequence belongs to the XseB family. In terms of assembly, heterooligomer composed of large and small subunits.

It is found in the cytoplasm. The enzyme catalyses Exonucleolytic cleavage in either 5'- to 3'- or 3'- to 5'-direction to yield nucleoside 5'-phosphates.. Its function is as follows. Bidirectionally degrades single-stranded DNA into large acid-insoluble oligonucleotides, which are then degraded further into small acid-soluble oligonucleotides. The polypeptide is Exodeoxyribonuclease 7 small subunit (Pseudomonas entomophila (strain L48)).